The chain runs to 265 residues: tRNA pseudouridine synthase A (265 aa).

D55 functions as the Nucleophile in the catalytic mechanism. A substrate-binding site is contributed by Y113.

This sequence belongs to the tRNA pseudouridine synthase TruA family. In terms of assembly, homodimer.

The enzyme catalyses uridine(38/39/40) in tRNA = pseudouridine(38/39/40) in tRNA. Its function is as follows. Formation of pseudouridine at positions 38, 39 and 40 in the anticodon stem and loop of transfer RNAs. The chain is tRNA pseudouridine synthase A from Levilactobacillus brevis (strain ATCC 367 / BCRC 12310 / CIP 105137 / JCM 1170 / LMG 11437 / NCIMB 947 / NCTC 947) (Lactobacillus brevis).